Consider the following 553-residue polypeptide: ATP-dependent RNA helicase ROK1 (553 aa).

Positions 120-148 (DMIGRFKIDKRVLSNLLDAEFVEPTPIQC) match the Q motif motif. Residues 151-327 (IPITLANRDL…HSIMKDPIRV (177 aa)) form the Helicase ATP-binding domain. 164–171 (APTGSGKT) is a binding site for ATP. A DEAD box motif is present at residues 274–277 (DEAD). Residues 338-502 (TIEQKLVFTG…GLSDWMEDLG (165 aa)) enclose the Helicase C-terminal domain. Positions 528–553 (VIKQKRKQRQNMIEASKRRKQAESEQ) are disordered.

This sequence belongs to the DEAD box helicase family. DDX52/ROK1 subfamily. In terms of assembly, interacts with the U3 snoRNA and is associated with the 90S and 40S pre-ribosomes.

It is found in the nucleus. The protein resides in the nucleolus. The catalysed reaction is ATP + H2O = ADP + phosphate + H(+). Functionally, ATP-dependent RNA helicase involved in 40S ribosomal subunit biogenesis. Required for the processing and cleavage of 35S pre-rRNA at sites A0, A1, and A2, leading to mature 18S rRNA. This is ATP-dependent RNA helicase ROK1 (ROK1) from Lodderomyces elongisporus (strain ATCC 11503 / CBS 2605 / JCM 1781 / NBRC 1676 / NRRL YB-4239) (Yeast).